A 310-amino-acid chain; its full sequence is MKVGIVGSGFVGSATAYALVLQGVAREVVLVDLDRKLAQAHAEDILHATPFAHPVWVRSGWYEDLEGARVVIVAAGVAQRPGETRLQLLDRNAQVFADVVPKILKAAPEAVLLIATNPVDVMTQVAYRLSGLPPERVVGSGTILDTARFRALLAQHLLVAPQSVHAYVVGEHGDSEVLVWSSAQVGGVDLEAFAQARGRALTPDDRLRIDEGVRRAAYRIIEGKGATYYGIGAGLARLTRAILTDEKGVFTVSLFTPEVEGVEEVALSLPRILGARGVEATLYPRLNEEERQALRRSAEILKGAASALGF.

NAD(+)-binding positions include Val11, Asp32, Tyr62, and 76 to 77; that span reads GV. Substrate-binding positions include Gln79, Arg85, and 117–120; that span reads NPVD. NAD(+) contacts are provided by residues 115–117 and Ser140; that span reads ATN. 145-148 lines the substrate pocket; the sequence is DTAR. 2 residues coordinate beta-D-fructose 1,6-bisphosphate: Arg150 and His165. The active-site Proton acceptor is the His172. Position 218 is a phosphotyrosine (Tyr218). Residue Thr227 coordinates substrate.

This sequence belongs to the LDH/MDH superfamily. LDH family. As to quaternary structure, homotetramer.

It is found in the cytoplasm. It catalyses the reaction (S)-lactate + NAD(+) = pyruvate + NADH + H(+). It participates in fermentation; pyruvate fermentation to lactate; (S)-lactate from pyruvate: step 1/1. With respect to regulation, activated by citrate at pH 5. Allosterically activated by fructose 1,6-bisphosphate (FBP) at pH from 5.8 to 7.2. Its function is as follows. Catalyzes the conversion of lactate to pyruvate. This is L-lactate dehydrogenase from Thermus aquaticus.